The chain runs to 244 residues: ATP synthase subunit O, mitochondrial (244 aa).

The N-terminal 45 residues, 1-45 (MAMTGRARSMGFSILQKALSSAQRSNAHRSILCPTLSNSELLRNY), are a transit peptide targeting the mitochondrion.

This sequence belongs to the ATPase delta chain family. In terms of assembly, F-type ATPases have 2 components, CF(1) - the catalytic core - and CF(0) - the membrane proton channel. CF(1) has five subunits: alpha(3), beta(3), gamma(1), delta(1), epsilon(1). CF(0) has three main subunits: a, b and c.

The protein localises to the mitochondrion. It localises to the mitochondrion inner membrane. In terms of biological role, mitochondrial membrane ATP synthase (F(1)F(0) ATP synthase or Complex V) produces ATP from ADP in the presence of a proton gradient across the membrane which is generated by electron transport complexes of the respiratory chain. F-type ATPases consist of two structural domains, F(1) - containing the extramembraneous catalytic core and F(0) - containing the membrane proton channel, linked together by a central stalk and a peripheral stalk. During catalysis, ATP synthesis in the catalytic domain of F(1) is coupled via a rotary mechanism of the central stalk subunits to proton translocation. Part of the complex F(0) domain and the peripheric stalk, which acts as a stator to hold the catalytic alpha(3)beta(3) subcomplex and subunit a/ATP6 static relative to the rotary elements. This is ATP synthase subunit O, mitochondrial from Ipomoea batatas (Sweet potato).